The following is a 159-amino-acid chain: Large ribosomal subunit protein uL10 (159 aa).

It belongs to the universal ribosomal protein uL10 family. Part of the ribosomal stalk of the 50S ribosomal subunit. The N-terminus interacts with L11 and the large rRNA to form the base of the stalk. The C-terminus forms an elongated spine to which L12 dimers bind in a sequential fashion forming a multimeric L10(L12)X complex.

Forms part of the ribosomal stalk, playing a central role in the interaction of the ribosome with GTP-bound translation factors. The polypeptide is Large ribosomal subunit protein uL10 (Campylobacter lari (strain RM2100 / D67 / ATCC BAA-1060)).